A 775-amino-acid polypeptide reads, in one-letter code: 5-methyltetrahydropteroyltriglutamate--homocysteine methyltransferase (775 aa).

Residues 15–18 (RELK) and lysine 118 each bind 5-methyltetrahydropteroyltri-L-glutamate. L-homocysteine is bound by residues 448–450 (IGS) and glutamate 501. L-methionine is bound by residues 448-450 (IGS) and glutamate 501. Residues 532 to 533 (RC) and tryptophan 578 each bind 5-methyltetrahydropteroyltri-L-glutamate. Position 616 (aspartate 616) interacts with L-homocysteine. Aspartate 616 is a binding site for L-methionine. Glutamate 622 is a 5-methyltetrahydropteroyltri-L-glutamate binding site. Residues histidine 658, cysteine 660, and glutamate 682 each contribute to the Zn(2+) site. Residue histidine 711 is the Proton donor of the active site. Residue cysteine 743 coordinates Zn(2+).

Belongs to the vitamin-B12 independent methionine synthase family. Requires Zn(2+) as cofactor.

The catalysed reaction is 5-methyltetrahydropteroyltri-L-glutamate + L-homocysteine = tetrahydropteroyltri-L-glutamate + L-methionine. It functions in the pathway amino-acid biosynthesis; L-methionine biosynthesis via de novo pathway; L-methionine from L-homocysteine (MetE route): step 1/1. In terms of biological role, catalyzes the transfer of a methyl group from 5-methyltetrahydrofolate to homocysteine resulting in methionine formation. In Cytophaga hutchinsonii (strain ATCC 33406 / DSM 1761 / CIP 103989 / NBRC 15051 / NCIMB 9469 / D465), this protein is 5-methyltetrahydropteroyltriglutamate--homocysteine methyltransferase.